Reading from the N-terminus, the 406-residue chain is Cysteine desulfurase (406 aa).

The residue at position 226 (K226) is an N6-(pyridoxal phosphate)lysine. C364 functions as the Cysteine persulfide intermediate in the catalytic mechanism.

The protein belongs to the class-V pyridoxal-phosphate-dependent aminotransferase family. Csd subfamily. Homodimer. Interacts with SufE and the SufBCD complex composed of SufB, SufC and SufD. The interaction with SufE is required to mediate the direct transfer of the sulfur atom from the S-sulfanylcysteine. Requires pyridoxal 5'-phosphate as cofactor.

The protein localises to the cytoplasm. The catalysed reaction is (sulfur carrier)-H + L-cysteine = (sulfur carrier)-SH + L-alanine. It carries out the reaction L-selenocysteine + AH2 = hydrogenselenide + L-alanine + A + H(+). It participates in cofactor biosynthesis; iron-sulfur cluster biosynthesis. Functionally, cysteine desulfurases mobilize the sulfur from L-cysteine to yield L-alanine, an essential step in sulfur metabolism for biosynthesis of a variety of sulfur-containing biomolecules. Component of the suf operon, which is activated and required under specific conditions such as oxidative stress and iron limitation. Acts as a potent selenocysteine lyase in vitro, that mobilizes selenium from L-selenocysteine. Selenocysteine lyase activity is however unsure in vivo. This is Cysteine desulfurase from Klebsiella pneumoniae subsp. pneumoniae (strain ATCC 700721 / MGH 78578).